The sequence spans 473 residues: Iron transporter SMF3 (473 aa).

A run of 2 helical transmembrane segments spans residues Phe14 to Ser34 and Thr44 to Val64. Asn87 carries N-linked (GlcNAc...) asparagine glycosylation. Transmembrane regions (helical) follow at residues Ala97–Phe117, Ile119–Tyr139, Phe152–Phe172, Ala198–Gly218, Leu257–Gly277, Leu297–Ser317, Leu352–Asp372, Ile373–Ile393, and Val448–Gly468.

Belongs to the NRAMP family.

Its subcellular location is the vacuole membrane. The protein localises to the endoplasmic reticulum membrane. Its function is as follows. Has a role in controlling the cellular iron ion levels. Mobilizes vacuolar stores of iron in conditions of low iron levels. This is Iron transporter SMF3 (SMF3) from Saccharomyces cerevisiae (strain ATCC 204508 / S288c) (Baker's yeast).